The sequence spans 318 residues: NADH-ubiquinone oxidoreductase chain 1 (318 aa).

The next 8 membrane-spanning stretches (helical) occupy residues Pro2–Leu22, Ile68–Pro88, Leu100–Gly120, Leu146–Val166, His171–Ala191, Ile213–Met233, Glu253–Ile273, and Leu285–Ile305.

Belongs to the complex I subunit 1 family. Core subunit of respiratory chain NADH dehydrogenase (Complex I) which is composed of 45 different subunits.

The protein resides in the mitochondrion inner membrane. It carries out the reaction a ubiquinone + NADH + 5 H(+)(in) = a ubiquinol + NAD(+) + 4 H(+)(out). In terms of biological role, core subunit of the mitochondrial membrane respiratory chain NADH dehydrogenase (Complex I) which catalyzes electron transfer from NADH through the respiratory chain, using ubiquinone as an electron acceptor. Essential for the catalytic activity and assembly of complex I. This chain is NADH-ubiquinone oxidoreductase chain 1 (MT-ND1), found in Pan troglodytes (Chimpanzee).